A 31-amino-acid polypeptide reads, in one-letter code: Fibrinogen beta chain (31 aa).

Acidic residues predominate over residues 1–10 (HYYDDTDEEE). The interval 1 to 31 (HYYDDTDEEERIVSTVDARGHRPLDKKREEA) is disordered. Tyr-2 is subject to Sulfotyrosine; partial. Tyr-3 is subject to Sulfotyrosine. Residues 18–31 (ARGHRPLDKKREEA) show a composition bias toward basic and acidic residues.

As to quaternary structure, heterohexamer; disulfide linked. Contains 2 sets of 3 non-identical chains (alpha, beta and gamma). The 2 heterotrimers are in head to head conformation with the N-termini in a small central domain. Post-translationally, conversion of fibrinogen to fibrin is triggered by thrombin, which cleaves fibrinopeptides A and B from alpha and beta chains, and thus exposes the N-terminal polymerization sites responsible for the formation of the soft clot.

Its subcellular location is the secreted. In terms of biological role, cleaved by the protease thrombin to yield monomers which, together with fibrinogen alpha (FGA) and fibrinogen gamma (FGG), polymerize to form an insoluble fibrin matrix. Fibrin has a major function in hemostasis as one of the primary components of blood clots. In addition, functions during the early stages of wound repair to stabilize the lesion and guide cell migration during re-epithelialization. Was originally thought to be essential for platelet aggregation, based on in vitro studies using anticoagulated blood. However subsequent studies have shown that it is not absolutely required for thrombus formation in vivo. Enhances expression of SELP in activated platelets. Maternal fibrinogen is essential for successful pregnancy. Fibrin deposition is also associated with infection, where it protects against IFNG-mediated hemorrhage. May also facilitate the antibacterial immune response via both innate and T-cell mediated pathways. The sequence is that of Fibrinogen beta chain (FGB) from Canis lupus familiaris (Dog).